The chain runs to 299 residues: Formamidopyrimidine-DNA glycosylase (299 aa).

The Schiff-base intermediate with DNA role is filled by Pro-2. The active-site Proton donor is the Glu-3. Lys-58 (proton donor; for beta-elimination activity) is an active-site residue. The DNA site is built by His-106, Arg-125, and Lys-168. Residues 259–295 form an FPG-type zinc finger; the sequence is RVYDRVGHACPTKGCTGRVGRIVQGGRSTFFCETCQV. Arg-285 (proton donor; for delta-elimination activity) is an active-site residue.

Belongs to the FPG family. In terms of assembly, monomer. Zn(2+) is required as a cofactor.

It catalyses the reaction Hydrolysis of DNA containing ring-opened 7-methylguanine residues, releasing 2,6-diamino-4-hydroxy-5-(N-methyl)formamidopyrimidine.. It carries out the reaction 2'-deoxyribonucleotide-(2'-deoxyribose 5'-phosphate)-2'-deoxyribonucleotide-DNA = a 3'-end 2'-deoxyribonucleotide-(2,3-dehydro-2,3-deoxyribose 5'-phosphate)-DNA + a 5'-end 5'-phospho-2'-deoxyribonucleoside-DNA + H(+). In terms of biological role, involved in base excision repair of DNA damaged by oxidation or by mutagenic agents. Acts as a DNA glycosylase that recognizes and removes damaged bases. Has a preference for oxidized purines, such as 7,8-dihydro-8-oxoguanine (8-oxoG). Has AP (apurinic/apyrimidinic) lyase activity and introduces nicks in the DNA strand. Cleaves the DNA backbone by beta-delta elimination to generate a single-strand break at the site of the removed base with both 3'- and 5'-phosphates. This Methylorubrum extorquens (strain CM4 / NCIMB 13688) (Methylobacterium extorquens) protein is Formamidopyrimidine-DNA glycosylase.